The following is a 227-amino-acid chain: Threonine--tRNA ligase (227 aa).

The segment at 1–120 (DIELKLSTRP…LIEHYEGAFP (120 aa)) is catalytic.

Belongs to the class-II aminoacyl-tRNA synthetase family. In terms of assembly, homodimer.

The protein localises to the cytoplasm. The enzyme catalyses tRNA(Thr) + L-threonine + ATP = L-threonyl-tRNA(Thr) + AMP + diphosphate + H(+). Its function is as follows. Catalyzes the attachment of threonine to tRNA(Thr) in a two-step reaction: L-threonine is first activated by ATP to form Thr-AMP and then transferred to the acceptor end of tRNA(Thr). Also edits incorrectly charged L-seryl-tRNA(Thr). The protein is Threonine--tRNA ligase of Pseudomonas syringae pv. syringae.